A 519-amino-acid polypeptide reads, in one-letter code: Baeyer-Villiger monooxygenase (519 aa).

FAD-binding positions include Glu41, 49–52 (TWRD), Asp61, Tyr67, and Val110. 59 to 61 (ACD) is an NADP(+) binding site. NADP(+) contacts are provided by residues 183-189 (TGASAIQ), 206-207 (RT), and 292-293 (KR). Met399 is a binding site for FAD. Positions 499-519 (GAKAAEADTGADTGADAEVSA) are disordered.

This sequence belongs to the FAD-binding monooxygenase family. FAD serves as cofactor.

Functionally, catalyzes a Baeyer-Villiger oxidation reaction, i.e. the insertion of an oxygen atom into a carbon-carbon bond adjacent to a carbonyl, which converts ketones to esters or lactones using NADPH and/or NADH as an electron donor. Thus, can convert bicyclo[3.2.0]hept-2-en-6-one into the oxidative lactone products 2-oxabicyclo[3.3.0]oct-6-en-3-one and 3-oxabicyclo[3.3.0]oct-6-en-2-one. Is also able to catalyze the sulfoxidation of methyl phenyl sulfide (thioanisole). In Streptomyces coelicolor (strain ATCC BAA-471 / A3(2) / M145), this protein is Baeyer-Villiger monooxygenase.